We begin with the raw amino-acid sequence, 455 residues long: Ribulose bisphosphate carboxylase large chain (455 aa).

K5 carries the post-translational modification N6,N6,N6-trimethyllysine. Positions 114 and 164 each coordinate substrate. The active-site Proton acceptor is K166. K168 lines the substrate pocket. Residues K192, D194, and E195 each coordinate Mg(2+). K192 is subject to N6-carboxylysine. The active-site Proton acceptor is the H285. Residues R286, H318, and S370 each contribute to the substrate site.

This sequence belongs to the RuBisCO large chain family. Type I subfamily. Heterohexadecamer of 8 large chains and 8 small chains; disulfide-linked. The disulfide link is formed within the large subunit homodimers. The cofactor is Mg(2+). The disulfide bond which can form in the large chain dimeric partners within the hexadecamer appears to be associated with oxidative stress and protein turnover.

The protein resides in the plastid. The protein localises to the chloroplast. It catalyses the reaction 2 (2R)-3-phosphoglycerate + 2 H(+) = D-ribulose 1,5-bisphosphate + CO2 + H2O. The catalysed reaction is D-ribulose 1,5-bisphosphate + O2 = 2-phosphoglycolate + (2R)-3-phosphoglycerate + 2 H(+). RuBisCO catalyzes two reactions: the carboxylation of D-ribulose 1,5-bisphosphate, the primary event in carbon dioxide fixation, as well as the oxidative fragmentation of the pentose substrate in the photorespiration process. Both reactions occur simultaneously and in competition at the same active site. The polypeptide is Ribulose bisphosphate carboxylase large chain (Lupinus luteus (European yellow lupine)).